The chain runs to 684 residues: Cleavage and polyadenylation specificity factor subunit 3 (684 aa).

Position 2 is an N-acetylserine (S2). 6 residues coordinate Zn(2+): H71, H73, D75, H76, H158, and D179. H396 (proton donor) is an active-site residue. H418 contacts Zn(2+). Glycyl lysine isopeptide (Lys-Gly) (interchain with G-Cter in SUMO) cross-links involve residues K462, K465, and K545. Phosphoserine is present on S659. T681 is subject to Phosphothreonine.

This sequence belongs to the metallo-beta-lactamase superfamily. RNA-metabolizing metallo-beta-lactamase-like family. CPSF3 subfamily. In terms of assembly, component of the cleavage and polyadenylation specificity factor (CPSF) complex, composed of CPSF1, CPSF2, CPSF3, CPSF4 and FIP1L1. Interacts with CPSF2, CSTF2 and SYMPK. Interacts with TUT1; the interaction is direct and mediates the recruitment of the CPSF complex on the 3'UTR of pre-mRNAs. Interacts with WDR33. Interacts with ZC3H3. Zn(2+) serves as cofactor. Sumoylated on Lys-462, Lys-465 and Lys-545, preferentially by SUMO3.

It localises to the nucleus. Functionally, component of the cleavage and polyadenylation specificity factor (CPSF) complex that plays a key role in pre-mRNA 3'-end formation, recognizing the AAUAAA signal sequence and interacting with poly(A) polymerase and other factors to bring about cleavage and poly(A) addition. Has endonuclease activity, and functions as an mRNA 3'-end-processing endonuclease. Also involved in the histone 3'-end pre-mRNA processing. U7 snRNP-dependent protein that induces both the 3'-endoribonucleolytic cleavage of histone pre-mRNAs and acts as a 5' to 3' exonuclease for degrading the subsequent downstream cleavage product (DCP) of mature histone mRNAs. Cleavage occurs after the 5'-ACCCA-3' sequence in the histone pre-mRNA leaving a 3'hydroxyl group on the upstream fragment containing the stem loop (SL) and 5' phosphate on the downstream cleavage product (DCP) starting with CU nucleotides. The U7-dependent 5' to 3' exonuclease activity is processive and degrades the DCP RNA substrate even after complete removal of the U7-binding site. Binds to the downstream cleavage product (DCP) of histone pre-mRNAs and the cleaved DCP RNA substrate in a U7 snRNP dependent manner. Required for entering/progressing through S-phase of the cell cycle. Required for the selective processing of microRNAs (miRNAs) during embryonic stem cell differentiation via its interaction with ISY1. Required for the biogenesis of all miRNAs from the pri-miR-17-92 primary transcript except miR-92a. Only required for the biogenesis of miR-290 and miR-96 from the pri-miR-290-295 and pri-miR-96-183 primary transcripts, respectively. This Bos taurus (Bovine) protein is Cleavage and polyadenylation specificity factor subunit 3 (CPSF3).